Reading from the N-terminus, the 301-residue chain is Beta carbonic anhydrase 5, chloroplastic (301 aa).

A chloroplast-targeting transit peptide spans Met1–Met56. Thr65 is subject to Phosphothreonine. Phosphoserine is present on Ser128. Cys231 is subject to S-nitrosocysteine.

It belongs to the beta-class carbonic anhydrase family. Strongly expressed in aerial tissues including leaves, stems, flowers and siliques.

Its subcellular location is the plastid. It is found in the chloroplast. The enzyme catalyses hydrogencarbonate + H(+) = CO2 + H2O. Its function is as follows. Reversible hydration of carbon dioxide. The protein is Beta carbonic anhydrase 5, chloroplastic (BCA5) of Arabidopsis thaliana (Mouse-ear cress).